Consider the following 147-residue polypeptide: Deoxyuridine 5'-triphosphate nucleotidohydrolase (147 aa).

Position 24 (Arg24) interacts with Mg(2+). DUTP contacts are provided by residues 68-70 (PRS), 82-85 (GVID), Tyr88, Gly93, Ile95, and Arg111.

It belongs to the dUTPase family. Mg(2+) serves as cofactor.

The enzyme catalyses dUTP + H2O = dUMP + diphosphate + H(+). Its function is as follows. This enzyme is involved in nucleotide metabolism: it produces dUMP, the immediate precursor of thymidine nucleotides and it decreases the intracellular concentration of dUTP so that uracil cannot be incorporated into DNA. This is Deoxyuridine 5'-triphosphate nucleotidohydrolase (OPG046) from Oryctolagus cuniculus (Rabbit).